Consider the following 513-residue polypeptide: Na(+)/H(+) antiporter NhaB (513 aa).

The next 12 helical transmembrane spans lie at 23-43 (LALIIFLIVNPLIFLISPFVA), 52-72 (IFTLAMALKCYPLLPGGLLAI), 97-117 (LLLMFMVAGIYFMKQLLLFIF), 120-140 (LLLSIRSKMLLSLSFCVAAAF), 144-164 (FLDALTVVAVVISVAVGFYGI), 202-222 (LMMHAGVGTALGGVMTMVGEP), 238-258 (FFLRMSPVTVPVLICGLLTCL), 303-323 (AIIGVWLVTALALHLAEVGLI), 348-368 (TESLPFTALLTVFFSVVAVII), 391-411 (LFYIFNGLLSSISDNVFVGTI), 447-467 (ATPNGQAAFLFLLTSALAPLI), and 475-495 (VWMALPYTLVLTLVGLLCVEF).

It belongs to the NhaB Na(+)/H(+) (TC 2.A.34) antiporter family.

It localises to the cell inner membrane. It catalyses the reaction 2 Na(+)(in) + 3 H(+)(out) = 2 Na(+)(out) + 3 H(+)(in). Its function is as follows. Na(+)/H(+) antiporter that extrudes sodium in exchange for external protons. In Shigella boydii serotype 18 (strain CDC 3083-94 / BS512), this protein is Na(+)/H(+) antiporter NhaB.